The following is a 393-amino-acid chain: 4-hydroxyphenylpyruvate dioxygenase (393 aa).

VOC domains follow at residues 17–148 (AFDH…LLER) and 179–339 (FLDH…IFSK). Fe cation contacts are provided by H182, H267, and E350.

The protein belongs to the 4HPPD family. Fe cation is required as a cofactor. Expressed in the hypodermis and intestine.

It carries out the reaction 3-(4-hydroxyphenyl)pyruvate + O2 = homogentisate + CO2. Its pathway is amino-acid degradation; L-phenylalanine degradation; acetoacetate and fumarate from L-phenylalanine: step 3/6. Its function is as follows. Key enzyme in the degradation of tyrosine. This is 4-hydroxyphenylpyruvate dioxygenase from Caenorhabditis elegans.